The chain runs to 431 residues: Histidinol dehydrogenase (431 aa).

NAD(+)-binding residues include Tyr127, Gln189, and Asn212. Substrate is bound by residues Ser237, Gln259, and His262. Residues Gln259 and His262 each contribute to the Zn(2+) site. Catalysis depends on proton acceptor residues Glu326 and His327. Positions 327, 360, 414, and 419 each coordinate substrate. Asp360 serves as a coordination point for Zn(2+). His419 is a Zn(2+) binding site.

It belongs to the histidinol dehydrogenase family. Zn(2+) is required as a cofactor.

It catalyses the reaction L-histidinol + 2 NAD(+) + H2O = L-histidine + 2 NADH + 3 H(+). It functions in the pathway amino-acid biosynthesis; L-histidine biosynthesis; L-histidine from 5-phospho-alpha-D-ribose 1-diphosphate: step 9/9. Functionally, catalyzes the sequential NAD-dependent oxidations of L-histidinol to L-histidinaldehyde and then to L-histidine. The chain is Histidinol dehydrogenase from Xanthomonas campestris pv. campestris (strain ATCC 33913 / DSM 3586 / NCPPB 528 / LMG 568 / P 25).